A 261-amino-acid chain; its full sequence is 4-hydroxy-tetrahydrodipicolinate reductase (261 aa).

Position 8–13 (8–13 (GYKGRM)) interacts with NAD(+). Arginine 36 provides a ligand contact to NADP(+). Residues 95–97 (GTT) and 121–124 (APNF) each bind NAD(+). The Proton donor/acceptor role is filled by histidine 151. Histidine 152 contributes to the (S)-2,3,4,5-tetrahydrodipicolinate binding site. Lysine 155 (proton donor) is an active-site residue. 161–162 (GT) is a binding site for (S)-2,3,4,5-tetrahydrodipicolinate.

It belongs to the DapB family.

Its subcellular location is the cytoplasm. The catalysed reaction is (S)-2,3,4,5-tetrahydrodipicolinate + NAD(+) + H2O = (2S,4S)-4-hydroxy-2,3,4,5-tetrahydrodipicolinate + NADH + H(+). It carries out the reaction (S)-2,3,4,5-tetrahydrodipicolinate + NADP(+) + H2O = (2S,4S)-4-hydroxy-2,3,4,5-tetrahydrodipicolinate + NADPH + H(+). The protein operates within amino-acid biosynthesis; L-lysine biosynthesis via DAP pathway; (S)-tetrahydrodipicolinate from L-aspartate: step 4/4. Catalyzes the conversion of 4-hydroxy-tetrahydrodipicolinate (HTPA) to tetrahydrodipicolinate. This is 4-hydroxy-tetrahydrodipicolinate reductase from Lactiplantibacillus plantarum (strain ATCC BAA-793 / NCIMB 8826 / WCFS1) (Lactobacillus plantarum).